A 470-amino-acid polypeptide reads, in one-letter code: ATP synthase subunit beta (470 aa).

An ATP-binding site is contributed by 157–164 (GGAGVGKT).

It belongs to the ATPase alpha/beta chains family. F-type ATPases have 2 components, CF(1) - the catalytic core - and CF(0) - the membrane proton channel. CF(1) has five subunits: alpha(3), beta(3), gamma(1), delta(1), epsilon(1). CF(0) has three main subunits: a(1), b(2) and c(9-12). The alpha and beta chains form an alternating ring which encloses part of the gamma chain. CF(1) is attached to CF(0) by a central stalk formed by the gamma and epsilon chains, while a peripheral stalk is formed by the delta and b chains.

It localises to the cell inner membrane. The catalysed reaction is ATP + H2O + 4 H(+)(in) = ADP + phosphate + 5 H(+)(out). Functionally, produces ATP from ADP in the presence of a proton gradient across the membrane. The catalytic sites are hosted primarily by the beta subunits. In Geotalea uraniireducens (strain Rf4) (Geobacter uraniireducens), this protein is ATP synthase subunit beta.